The following is a 190-amino-acid chain: Cytoglobin (190 aa).

Positions Met-1–Glu-21 are disordered. The Globin domain maps to Glu-18–Lys-167. A disulfide bridge connects residues Cys-38 and Cys-83. Heme b contacts are provided by His-81 and His-113.

Belongs to the globin family. As to quaternary structure, monomeric. Homodimer; disulfide-linked in vitro. Also homooligomeric in vitro. In terms of processing, the formation of an intramolecular disulfide bond between cysteines Cys-38 and Cys-83 specifically enhances the nitrite reductase activity. In terms of tissue distribution, widely expressed (at protein level).

It localises to the cytoplasm. The protein localises to the nucleus. The enzyme catalyses Fe(II)-heme b-[protein] + nitric oxide + O2 = Fe(III)-heme b-[protein] + nitrate. The catalysed reaction is Fe(III)-heme b-[protein] + nitric oxide + H2O = Fe(II)-heme b-[protein] + nitrite + 2 H(+). It catalyses the reaction 2 superoxide + 2 H(+) = H2O2 + O2. It carries out the reaction H2O2 + AH2 = A + 2 H2O. With respect to regulation, the nitric oxide dioxygenase activity is activated by a reducing system composed of cytochrome b5, its upstream reductase CYB5R3 and NADH. Functionally, probable multifunctional globin with a hexacoordinated heme iron required for the catalysis of various reactions depending on redox condition of the cell as well as oxygen availability. Has a nitric oxide dioxygenase (NOD) activity and is most probably involved in cell-mediated and oxygen-dependent nitric oxide consumption. By scavenging this second messenger may regulate several biological processes including endothelium-mediated vasodilation and vascular tone. Under normoxic conditions functions as a nitric oxide dioxygenase (NOD) but under hypoxic conditions the globin may switch its function to that of a nitrite (NO2) reductase (NiR), generating nitric oxide. Could also have peroxidase and superoxide dismutase activities, detoxifying reactive oxygen species and protecting cells against oxidative stress. Also binds dioxygen with low affinity and could function as an oxygen sensor but has probably no function as a respiratory oxygen carrier. This chain is Cytoglobin, found in Rattus norvegicus (Rat).